The chain runs to 865 residues: Protein translocase subunit SecA (865 aa).

Residues Gln93, 111 to 115 (GEGKT), and Asp501 contribute to the ATP site. Zn(2+)-binding residues include Cys841, Cys843, Cys852, and Cys853.

It belongs to the SecA family. Monomer and homodimer. Part of the essential Sec protein translocation apparatus which comprises SecA, SecYEG and auxiliary proteins SecDF-YajC and YidC. It depends on Zn(2+) as a cofactor.

It localises to the cell inner membrane. Its subcellular location is the cytoplasm. It carries out the reaction ATP + H2O + cellular proteinSide 1 = ADP + phosphate + cellular proteinSide 2.. In terms of biological role, part of the Sec protein translocase complex. Interacts with the SecYEG preprotein conducting channel. Has a central role in coupling the hydrolysis of ATP to the transfer of proteins into and across the cell membrane, serving as an ATP-driven molecular motor driving the stepwise translocation of polypeptide chains across the membrane. This Helicobacter acinonychis (strain Sheeba) protein is Protein translocase subunit SecA.